The sequence spans 702 residues: Ribosomal RNA large subunit methyltransferase K/L (702 aa).

The region spanning 43 to 154 is the THUMP domain; it reads LVYQSLMWSR…KETASIALDL (112 aa).

Belongs to the methyltransferase superfamily. RlmKL family.

It is found in the cytoplasm. The enzyme catalyses guanosine(2445) in 23S rRNA + S-adenosyl-L-methionine = N(2)-methylguanosine(2445) in 23S rRNA + S-adenosyl-L-homocysteine + H(+). It carries out the reaction guanosine(2069) in 23S rRNA + S-adenosyl-L-methionine = N(2)-methylguanosine(2069) in 23S rRNA + S-adenosyl-L-homocysteine + H(+). Its function is as follows. Specifically methylates the guanine in position 2445 (m2G2445) and the guanine in position 2069 (m7G2069) of 23S rRNA. The chain is Ribosomal RNA large subunit methyltransferase K/L from Escherichia coli O6:H1 (strain CFT073 / ATCC 700928 / UPEC).